A 254-amino-acid polypeptide reads, in one-letter code: MAIANKNIIFVAGLGGIGFDTSREIVKSGPKNLVILDRIENPAAIAELKALNPKVTVTFYPYDVTVPVAETTKLLKTIFDKLKTVDLLINGAGILDDYQIERTIAVNFTGTVNTTTAIMAFWDKRKGGPGGVIANICSVTGFNAIYQVPVYSASKAAALSFTNSLAKLAPITGVTAYSINPGITKTTLVHKFNSWLDVEPRVAELLLEHPTQTTLQCAQNFVKAIEANQNGAIWKLDLGRLEAIEWTKHWDSGI.

NAD(+) is bound at residue 10–33; that stretch reads FVAGLGGIGFDTSREIVKSGPKNL. Residue S138 participates in substrate binding. Catalysis depends on Y151, which acts as the Proton acceptor.

This sequence belongs to the short-chain dehydrogenases/reductases (SDR) family. In terms of assembly, homodimer.

The catalysed reaction is a primary alcohol + NAD(+) = an aldehyde + NADH + H(+). The enzyme catalyses a secondary alcohol + NAD(+) = a ketone + NADH + H(+). The polypeptide is Alcohol dehydrogenase 2 (Adh2) (Drosophila buzzatii (Fruit fly)).